Consider the following 876-residue polypeptide: Serrate RNA effector molecule homolog (876 aa).

The interval 1-90 (MGDSDDEYDR…RRDWDEHSSD (90 aa)) is disordered. At Gly-2 the chain carries N-acetylglycine. Ser-4 is subject to Phosphoserine. Tyr-8 is modified (phosphotyrosine). Residues 8 to 73 (YDRRRRDKFR…ERFSPPRHEL (66 aa)) show a composition bias toward basic and acidic residues. 3 positions are modified to phosphoserine: Ser-67, Ser-74, and Ser-136. Residue Lys-150 forms a Glycyl lysine isopeptide (Lys-Gly) (interchain with G-Cter in SUMO2) linkage. Residues 271-412 (EEEEEQAGKP…KPKDAAGLEC (142 aa)) are disordered. Over residues 297–347 (DGERKTNDKDEKKEDGKQAENDSSNDDKTKKSEGDGDKEEKKEDSEKEAKK) the composition is skewed to basic and acidic residues. Acidic residues predominate over residues 370-387 (SESESESGQAEEEKEEAE). Positions 388 to 412 (EALKEKEKPKEEEWEKPKDAAGLEC) are enriched in basic and acidic residues. A phosphoserine mark is found at Ser-493 and Ser-540. Thr-544 bears the Phosphothreonine mark. Ser-570 carries the post-translational modification Phosphoserine. A disordered region spans residues 575-598 (ELLGSSGGAPPEEPPKEGNPAEIN). Thr-671 is subject to Phosphothreonine. Ser-679 is modified (phosphoserine). 3 positions are modified to omega-N-methylarginine: Arg-833, Arg-840, and Arg-850. The segment at 835–854 (NYDAFRGQGGYPGKPRNRMV) is disordered.

The protein belongs to the ARS2 family. In terms of assembly, interacts with NCBP1 and DROSHA. Interacts with CASP8AP2 and ERBB4. Interacts with LUZP4. Interacts with NCBP2/CBP20 and NCBP3. Interacts with MTREX. In terms of tissue distribution, ubiquitously expressed.

It is found in the nucleus. The protein resides in the nucleoplasm. It localises to the cytoplasm. In terms of biological role, acts as a mediator between the cap-binding complex (CBC) and the primary microRNAs (miRNAs) processing machinery during cell proliferation. Contributes to the stability and delivery of capped primary miRNA transcripts to the primary miRNA processing complex containing DGCR8 and DROSHA, thereby playing a role in RNA-mediated gene silencing (RNAi) by miRNAs. Binds capped RNAs (m7GpppG-capped RNA); however interaction is probably mediated via its interaction with NCBP1/CBP80 component of the CBC complex. Involved in cell cycle progression at S phase. Does not directly confer arsenite resistance but rather modulates arsenic sensitivity. Independently of its activity on miRNAs, necessary and sufficient to promote neural stem cell self-renewal. Does so by directly binding SOX2 promoter and positively regulating its transcription. In Homo sapiens (Human), this protein is Serrate RNA effector molecule homolog (SRRT).